Consider the following 428-residue polypeptide: Hercynine oxygenase (428 aa).

Residue histidine 46 participates in Fe cation binding. Gamma-L-glutamyl-L-cysteine is bound at residue 82–85; that stretch reads RASR. The Fe cation site is built by histidine 129 and histidine 133. The gamma-L-glutamyl-L-cysteine site is built by aspartate 411 and arginine 415.

This sequence belongs to the EgtB family. In terms of assembly, monomer. It depends on Fe(2+) as a cofactor.

It catalyses the reaction gamma-L-glutamyl-L-cysteine + hercynine + O2 = gamma-L-glutamyl-hercynylcysteine S-oxide + H2O. It participates in amino-acid biosynthesis; ergothioneine biosynthesis. Catalyzes the oxidative sulfurization of hercynine (N-alpha,N-alpha,N-alpha-trimethyl-L-histidine) into hercynyl-gamma-L-glutamyl-L-cysteine sulfoxide, a step in the biosynthesis pathway of ergothioneine. Cannot use the alternative thiols cysteine, N-acetylcysteine, or glutathione instead of gamma-glutamylcysteine as substrates, and histidine is a poor sulfur acceptor substrate compared to hercynine. The sequence is that of Hercynine oxygenase from Mycolicibacterium smegmatis (strain ATCC 700084 / mc(2)155) (Mycobacterium smegmatis).